A 184-amino-acid polypeptide reads, in one-letter code: Mediator of RNA polymerase II transcription subunit 11 (184 aa).

Residues 142 to 152 are compositionally biased toward polar residues; that stretch reads ATTKQETNINN. The tract at residues 142-184 is disordered; the sequence is ATTKQETNINNEDSEKEKQENITAIETKKESSENEDEDFDMIA. Positions 154-173 are enriched in basic and acidic residues; that stretch reads DSEKEKQENITAIETKKESS. Residues 174–184 are compositionally biased toward acidic residues; it reads ENEDEDFDMIA.

Belongs to the Mediator complex subunit 11 family. In terms of assembly, component of the Mediator complex.

The protein resides in the nucleus. Its function is as follows. Component of the Mediator complex, a coactivator involved in the regulated transcription of nearly all RNA polymerase II-dependent genes. Mediator functions as a bridge to convey information from gene-specific regulatory proteins to the basal RNA polymerase II transcription machinery. Mediator is recruited to promoters by direct interactions with regulatory proteins and serves as a scaffold for the assembly of a functional pre-initiation complex with RNA polymerase II and the general transcription factors. The protein is Mediator of RNA polymerase II transcription subunit 11 (MED11) of Debaryomyces hansenii (strain ATCC 36239 / CBS 767 / BCRC 21394 / JCM 1990 / NBRC 0083 / IGC 2968) (Yeast).